Here is a 270-residue protein sequence, read N- to C-terminus: Replication protein A 32 kDa subunit (270 aa).

An N-acetylmethionine modification is found at methionine 1. Residues serine 4 and serine 8 each carry the phosphoserine; by PRKDC modification. Threonine 21 bears the Phosphothreonine; by PRKDC mark. The disordered stretch occupies residues 22 to 41; it reads QSPGGFGSPTPSQAEKKSRA. At serine 23 the chain carries Phosphoserine; by CDK2. The residue at position 29 (serine 29) is a Phosphoserine; by CDK1. Serine 33 carries the post-translational modification Phosphoserine; by PRKDC. Glycyl lysine isopeptide (Lys-Gly) (interchain with G-Cter in ubiquitin) cross-links involve residues lysine 37 and lysine 38. The OB DNA-binding region spans 74 to 148; it reads VTIVGIIRHA…KSLVAFKIIP (75 aa). The segment at 187–270 is interaction with RAD52, TIPIN, UNG and XPA; sequence GMGEPGNFSG…DDHFKSTDAE (84 aa).

Belongs to the replication factor A protein 2 family. As to quaternary structure, component of the replication protein A complex (RPA/RP-A), a heterotrimeric complex composed of RPA1, RPA2 and RPA3. Interacts with PRPF19; the PRP19-CDC5L complex is recruited to the sites of DNA repair where it ubiquitinates the replication protein A complex (RPA). Interacts with SERTAD3. Interacts with TIPIN. Interacts with TIMELESS. Interacts with PPP4R2; the interaction is direct, DNA damage-dependent and mediates the recruitment of the PP4 catalytic subunit PPP4C. Interacts (hyperphosphorylated) with RAD51. Interacts with SMARCAL1; the interaction is direct and mediates the recruitment to the RPA complex of SMARCAL1. Interacts with RAD52 and XPA; those interactions are direct and associate RAD52 and XPA to the RPA complex. Interacts with FBH1. Interacts with ETAA1; the interaction is direct and promotes ETAA1 recruitment at stalled replication forks. Interacts with DDI2. Interacts (in unphosphorylated form via N-terminus) with EIF4EBP3; the interaction enhances EIF4EBP3-mediated inhibition of EIF4E-mediated mRNA nuclear export. Interacts with nuclear UNG (isoform 2); this interaction mediates UNG recruitment to RPA-coated single-stranded DNA at stalled replication forks. Differentially phosphorylated throughout the cell cycle, becoming phosphorylated at the G1-S transition and dephosphorylated in late mitosis. Mainly phosphorylated at Ser-23 and Ser-29, by cyclin A-CDK2 and cyclin B-CDK1, respectively during DNA replication and mitosis. Dephosphorylation may require the serine/threonine-protein phosphatase 4. Phosphorylation at Ser-23 and Ser-29 is a prerequisite for further phosphorylation. Becomes hyperphosphorylated on additional residues including Ser-4, Ser-8, Thr-21 and Ser-33 in response to DNA damage. Hyperphosphorylation is mediated by ATM, ATR and PRKDC. Primarily recruited to DNA repair nuclear foci as a hypophosphorylated form it undergoes subsequent hyperphosphorylation, catalyzed by ATR. Hyperphosphorylation is required for RAD51 recruitment to chromatin and efficient DNA repair. Phosphorylation at Thr-21 depends upon RFWD3 presence. In terms of processing, DNA damage-induced 'Lys-63'-linked polyubiquitination by PRPF19 mediates ATRIP recruitment to the RPA complex at sites of DNA damage and activation of ATR. Ubiquitinated by RFWD3 at stalled replication forks in response to DNA damage: ubiquitination by RFWD3 does not lead to degradation by the proteasome and promotes removal of the RPA complex from stalled replication forks, promoting homologous recombination.

It localises to the nucleus. It is found in the PML body. Its function is as follows. As part of the heterotrimeric replication protein A complex (RPA/RP-A), binds and stabilizes single-stranded DNA intermediates, that form during DNA replication or upon DNA stress. It prevents their reannealing and in parallel, recruits and activates different proteins and complexes involved in DNA metabolism. Thereby, it plays an essential role both in DNA replication and the cellular response to DNA damage. In the cellular response to DNA damage, the RPA complex controls DNA repair and DNA damage checkpoint activation. Through recruitment of ATRIP activates the ATR kinase a master regulator of the DNA damage response. It is required for the recruitment of the DNA double-strand break repair factors RAD51 and RAD52 to chromatin in response to DNA damage. Also recruits to sites of DNA damage proteins like XPA and XPG that are involved in nucleotide excision repair and is required for this mechanism of DNA repair. Also plays a role in base excision repair (BER) probably through interaction with UNG. Also recruits SMARCAL1/HARP, which is involved in replication fork restart, to sites of DNA damage. May also play a role in telomere maintenance. The polypeptide is Replication protein A 32 kDa subunit (Rpa2) (Rattus norvegicus (Rat)).